Consider the following 120-residue polypeptide: Large ribosomal subunit protein eL18 (120 aa).

The protein belongs to the eukaryotic ribosomal protein eL18 family.

This chain is Large ribosomal subunit protein eL18, found in Thermoplasma acidophilum (strain ATCC 25905 / DSM 1728 / JCM 9062 / NBRC 15155 / AMRC-C165).